The sequence spans 754 residues: ATP-dependent zinc metalloprotease FtsH (754 aa).

The Cytoplasmic segment spans residues 1 to 9 (MKQRMKKPS). Residues 10-30 (LGTFILILILIGILAYVLWQF) traverse the membrane as a helical segment. At 31–186 (LSPKLGYKSL…FDRPRGNFLS (156 aa)) the chain is on the extracellular side. Residues 187 to 207 (SFIVPYIPFLLISLFGFWLFF) traverse the membrane as a helical segment. At 208–754 (RLSQNSQAGG…ESKIDSSKEQ (547 aa)) the chain is on the cytoplasmic side. Residue 277 to 284 (GPPGTGKT) coordinates ATP. A Zn(2+)-binding site is contributed by histidine 499. Glutamate 500 is an active-site residue. Zn(2+) is bound by residues histidine 503 and aspartate 577. The tract at residues 713–754 (QEKSYENEDQNQNSLEAINYNIDDQDDDKNDSESKIDSSKEQ) is disordered. Residues 743–754 (DSESKIDSSKEQ) show a composition bias toward basic and acidic residues.

The protein in the central section; belongs to the AAA ATPase family. It in the C-terminal section; belongs to the peptidase M41 family. Homohexamer. The cofactor is Zn(2+).

The protein localises to the cell membrane. Its function is as follows. Acts as a processive, ATP-dependent zinc metallopeptidase for both cytoplasmic and membrane proteins. Plays a role in the quality control of integral membrane proteins. The chain is ATP-dependent zinc metalloprotease FtsH from Mesomycoplasma conjunctivae (strain ATCC 25834 / NCTC 10147 / HRC/581) (Mycoplasma conjunctivae).